We begin with the raw amino-acid sequence, 79 residues long: Cell division protein ZapB (79 aa).

The stretch at 3-79 (LEVFEKLEAK…QALLGRMEEV (77 aa)) forms a coiled coil. Lysine 8 carries the N6-acetyllysine modification. A disordered region spans residues 34–65 (NNSLSQEVQNAQHQREELERENNHLKEQQNGW). Over residues 35-45 (NSLSQEVQNAQ) the composition is skewed to polar residues. Residues 46-60 (HQREELERENNHLKE) are compositionally biased toward basic and acidic residues.

It belongs to the ZapB family. In terms of assembly, homodimer. The ends of the coiled-coil dimer bind to each other, forming polymers. Interacts with FtsZ.

It is found in the cytoplasm. Its function is as follows. Non-essential, abundant cell division factor that is required for proper Z-ring formation. It is recruited early to the divisome by direct interaction with FtsZ, stimulating Z-ring assembly and thereby promoting cell division earlier in the cell cycle. Its recruitment to the Z-ring requires functional FtsA or ZipA. This Shigella boydii serotype 18 (strain CDC 3083-94 / BS512) protein is Cell division protein ZapB.